Here is a 122-residue protein sequence, read N- to C-terminus: Large ribosomal subunit protein uL14 (122 aa).

It belongs to the universal ribosomal protein uL14 family. In terms of assembly, part of the 50S ribosomal subunit. Forms a cluster with proteins L3 and L19. In the 70S ribosome, L14 and L19 interact and together make contacts with the 16S rRNA in bridges B5 and B8.

Its function is as follows. Binds to 23S rRNA. Forms part of two intersubunit bridges in the 70S ribosome. The protein is Large ribosomal subunit protein uL14 of Burkholderia multivorans (strain ATCC 17616 / 249).